The primary structure comprises 193 residues: Orotate phosphoribosyltransferase (193 aa).

5-phospho-alpha-D-ribose 1-diphosphate contacts are provided by residues arginine 102, lysine 103, lysine 106, histidine 108, and 129-137 (EDVVTTGGS). Residues threonine 133 and arginine 161 each contribute to the orotate site.

This sequence belongs to the purine/pyrimidine phosphoribosyltransferase family. PyrE subfamily. Homodimer. The cofactor is Mg(2+).

It carries out the reaction orotidine 5'-phosphate + diphosphate = orotate + 5-phospho-alpha-D-ribose 1-diphosphate. It functions in the pathway pyrimidine metabolism; UMP biosynthesis via de novo pathway; UMP from orotate: step 1/2. In terms of biological role, catalyzes the transfer of a ribosyl phosphate group from 5-phosphoribose 1-diphosphate to orotate, leading to the formation of orotidine monophosphate (OMP). The chain is Orotate phosphoribosyltransferase from Prochlorococcus marinus (strain NATL1A).